The primary structure comprises 262 residues: Pimeloyl-[acyl-carrier protein] methyl ester esterase (262 aa).

Residues 15 to 242 form the AB hydrolase-1 domain; the sequence is HLVLLHGWGL…AAHAPFISHP (228 aa). Residues tryptophan 22, 82–83, and 143–147 contribute to the substrate site; these read SL and FLALQ. Serine 82 (nucleophile) is an active-site residue. Catalysis depends on residues aspartate 207 and histidine 235. Histidine 235 contributes to the substrate binding site.

It belongs to the AB hydrolase superfamily. Carboxylesterase BioH family. In terms of assembly, monomer.

It localises to the cytoplasm. The catalysed reaction is 6-carboxyhexanoyl-[ACP] methyl ester + H2O = 6-carboxyhexanoyl-[ACP] + methanol + H(+). It participates in cofactor biosynthesis; biotin biosynthesis. Functionally, the physiological role of BioH is to remove the methyl group introduced by BioC when the pimeloyl moiety is complete. It allows to synthesize pimeloyl-ACP via the fatty acid synthetic pathway through the hydrolysis of the ester bonds of pimeloyl-ACP esters. The chain is Pimeloyl-[acyl-carrier protein] methyl ester esterase from Shigella flexneri.